Here is a 616-residue protein sequence, read N- to C-terminus: Glutamine--fructose-6-phosphate aminotransferase [isomerizing] (616 aa).

Cys-2 (nucleophile; for GATase activity) is an active-site residue. A Glutamine amidotransferase type-2 domain is found at 2-222 (CGIIGYSGPR…QERIVALSGD (221 aa)). A disordered region spans residues 70 to 89 (TGIGHTRWATHGEPSDRNAH). 2 SIS domains span residues 289–428 (IRDD…LRGF) and 461–606 (LAHW…VDRP). The For Fru-6P isomerization activity role is filled by Lys-611.

Homodimer.

It is found in the cytoplasm. The catalysed reaction is D-fructose 6-phosphate + L-glutamine = D-glucosamine 6-phosphate + L-glutamate. Catalyzes the first step in hexosamine metabolism, converting fructose-6P into glucosamine-6P using glutamine as a nitrogen source. The chain is Glutamine--fructose-6-phosphate aminotransferase [isomerizing] from Tropheryma whipplei (strain Twist) (Whipple's bacillus).